A 130-amino-acid polypeptide reads, in one-letter code: HTH-type transcriptional repressor YtrA (130 aa).

An HTH gntR-type domain is found at 10-78; the sequence is TPIYEQIIQQ…RGRGTYISEN (69 aa). Positions 38–57 form a DNA-binding region, H-T-H motif; it reads VRELATIIIANPNTVSKAYK.

Negatively regulates ABC transporter complex ytrBCDEF that plays a role in acetoin utilization during stationary phase and sporulation. The sequence is that of HTH-type transcriptional repressor YtrA (ytrA) from Bacillus subtilis (strain 168).